Reading from the N-terminus, the 142-residue chain is Small ribosomal subunit protein uS9 (142 aa).

Belongs to the universal ribosomal protein uS9 family. In terms of assembly, component of the small ribosomal subunit (SSU). Mature N.crassa ribosomes consist of a small (40S) and a large (60S) subunit. The 40S small subunit contains 1 molecule of ribosomal RNA (18S rRNA) and at least 32 different proteins. The large 60S subunit contains 3 rRNA molecules (26S, 5.8S and 5S rRNA) and at least 42 different proteins.

The protein localises to the cytoplasm. In terms of biological role, component of the ribosome, a large ribonucleoprotein complex responsible for the synthesis of proteins in the cell. The small ribosomal subunit (SSU) binds messenger RNAs (mRNAs) and translates the encoded message by selecting cognate aminoacyl-transfer RNA (tRNA) molecules. The large subunit (LSU) contains the ribosomal catalytic site termed the peptidyl transferase center (PTC), which catalyzes the formation of peptide bonds, thereby polymerizing the amino acids delivered by tRNAs into a polypeptide chain. The nascent polypeptides leave the ribosome through a tunnel in the LSU and interact with protein factors that function in enzymatic processing, targeting, and the membrane insertion of nascent chains at the exit of the ribosomal tunnel. The polypeptide is Small ribosomal subunit protein uS9 (rps-16) (Neurospora crassa (strain ATCC 24698 / 74-OR23-1A / CBS 708.71 / DSM 1257 / FGSC 987)).